A 197-amino-acid chain; its full sequence is MGLTISKLFSRLFAKKEMRILMVGLDAAGKTTILYKLKLGEIVTTIPTIGFNVETVEYKNISFTVWDVGGQDKIRPLWRHYFQNTQGLIFVVDSNDRDRVNEAREELMRMLAEDELRDAVLLVFANKQDLPNAMNAAEITDKLGLHSLRQRHWYIQSTCATSGEGLYEGLDWLSNQIRNQKANCNGTMLLWLLYPEK.

A lipid anchor (N-myristoyl glycine) is attached at glycine 2. GTP-binding positions include 24–31 (GLDAAGKT), 67–71 (DVGGQ), and 126–129 (NKQD).

This sequence belongs to the small GTPase superfamily. Arf family.

Its subcellular location is the golgi apparatus. It catalyses the reaction GTP + H2O = GDP + phosphate + H(+). Functionally, GTP-binding protein involved in protein trafficking; may modulate vesicle budding and uncoating within the Golgi apparatus. The chain is ADP-ribosylation factor 1 from Solanum tuberosum (Potato).